An 83-amino-acid polypeptide reads, in one-letter code: Aminoacyl carrier protein (83 aa).

A Carrier domain is found at 1–80 (MNATIREILA…DTVKLILDGK (80 aa)). At serine 35 the chain carries O-(pantetheine 4'-phosphoryl)serine.

In terms of processing, 4'-phosphopantetheine is transferred from CoA to a specific serine of the apo-form of this carrier protein.

Aminoacyl carrier protein. Can be charged with L-alanine, L-glycine or L-serine, via the formation of a thioester bond between the amino acid and the 4'-phosphopantetheinyl prosthetic group, catalyzed by the Atu2573 ligase. This chain is Aminoacyl carrier protein, found in Agrobacterium fabrum (strain C58 / ATCC 33970) (Agrobacterium tumefaciens (strain C58)).